A 1412-amino-acid chain; its full sequence is DNA-directed RNA polymerase subunit beta' (1412 aa).

Zn(2+) is bound by residues C70, C72, C85, and C88. The Mg(2+) site is built by D460, D462, and D464. The Zn(2+) site is built by C819, C893, C900, and C903. Positions E1393 to E1412 are disordered.

The protein belongs to the RNA polymerase beta' chain family. As to quaternary structure, the RNAP catalytic core consists of 2 alpha, 1 beta, 1 beta' and 1 omega subunit. When a sigma factor is associated with the core the holoenzyme is formed, which can initiate transcription. Mg(2+) is required as a cofactor. It depends on Zn(2+) as a cofactor.

The catalysed reaction is RNA(n) + a ribonucleoside 5'-triphosphate = RNA(n+1) + diphosphate. In terms of biological role, DNA-dependent RNA polymerase catalyzes the transcription of DNA into RNA using the four ribonucleoside triphosphates as substrates. In Burkholderia mallei (strain NCTC 10229), this protein is DNA-directed RNA polymerase subunit beta'.